We begin with the raw amino-acid sequence, 200 residues long: uncharacterized protein (200 aa).

Disordered regions lie at residues 1 to 27, 42 to 79, and 169 to 200; these read MTDTRREQEKDERRKLQEQSRQNEAET, IPKEAKGNEPLLENYKSGLQETRKELETTPDATKSTNA, and HGRAGIVRNPQAAQHQRQRQMEKTGAGREHGR. The segment covering 187–200 has biased composition (basic and acidic residues); that stretch reads RQMEKTGAGREHGR.

This is an uncharacterized protein from Shigella flexneri.